A 244-amino-acid polypeptide reads, in one-letter code: Probable transcriptional regulatory protein XfasM23_0940 (244 aa).

This sequence belongs to the TACO1 family.

The protein localises to the cytoplasm. The polypeptide is Probable transcriptional regulatory protein XfasM23_0940 (Xylella fastidiosa (strain M23)).